Consider the following 392-residue polypeptide: B2 bradykinin receptor (392 aa).

At 1–61 (MPCSWKLLGF…EWWSWLNAIQ (61 aa)) the chain is on the extracellular side. Residues asparagine 29 and asparagine 40 are each glycosylated (N-linked (GlcNAc...) asparagine). Residues 62–85 (APFLWVLFLLAALENLFVLSVFFL) traverse the membrane as a helical segment. At 86–94 (HKNSCTVAE) the chain is on the cytoplasmic side. The chain crosses the membrane as a helical span at residues 95–119 (IYLGNLAAADLILACGLPFWAITIA). Residues 120 to 132 (NNFDWVFGEVLCR) are Extracellular-facing. A disulfide bond links cysteine 131 and cysteine 212. Residues 133 to 154 (VVNTMIYMNLYSSICFLMLVSI) form a helical membrane-spanning segment. Residues 155 to 176 (DRYLALVKTMSMGRMRGVRWAK) are Cytoplasmic-facing. Tyrosine 157 carries the phosphotyrosine modification. A helical membrane pass occupies residues 177–199 (LYSLVIWGCTLLLSSPMLVFRTM). At 200-222 (REYSEEGHNVTACVIVYPSRSWE) the chain is on the extracellular side. Asparagine 208 carries an N-linked (GlcNAc...) asparagine glycan. A helical membrane pass occupies residues 223 to 249 (VFTNVLLNLVGFLLPLSVITFCTVRIL). Residues 250-268 (QVLRNNEMKKFKEVQTERK) are Cytoplasmic-facing. Residues 269–293 (ATVLVLAVLGLFVLCWVPFQISTFL) traverse the membrane as a helical segment. The Extracellular segment spans residues 294-312 (DTLLRLGVLSGCWDEHAVD). A helical transmembrane segment spans residues 313-336 (VITQISSYVAYSNSGLNPLVYVIV). The Cytoplasmic segment spans residues 337–392 (GKRFRKKSREVYRVLCQKGGCMGEPVQMENSMGTLRTSISVERQIHKLQDWAGKKQ). Position 348 is a phosphotyrosine (tyrosine 348). The S-palmitoyl cysteine moiety is linked to residue cysteine 352. Phosphoserine is present on serine 367. A Phosphothreonine modification is found at threonine 370. Phosphoserine; by GRK6 is present on residues serine 374 and serine 376.

The protein belongs to the G-protein coupled receptor 1 family. Bradykinin receptor subfamily. BDKRB2 sub-subfamily. In terms of assembly, forms a complex with PECAM1 and GNAQ. Interacts with PECAM1.

The protein resides in the cell membrane. Functionally, receptor for bradykinin. It is associated with G proteins that activate a phosphatidylinositol-calcium second messenger system. In Mus musculus (Mouse), this protein is B2 bradykinin receptor (Bdkrb2).